Consider the following 193-residue polypeptide: MNFLAHLHLAHLADSSLPGNLMADFVRGNPQGDYPAEIIDGIYMHRRIDVMTDNLAEVKEAREWFRPQTRRVAPITLDVMWDHFLSQHWAQLSPDLPLDEFVRYAEQQIVPILPDSPPRFVNLNQYLWSERWLERYQEMDFIQRVLNGMASRRPRLDALRDSWQDLDTHYDQLEGQFWRFYPQMMRLAENKQL.

It belongs to the AcpH family.

The enzyme catalyses holo-[ACP] + H2O = apo-[ACP] + (R)-4'-phosphopantetheine + H(+). Its function is as follows. Converts holo-ACP to apo-ACP by hydrolytic cleavage of the phosphopantetheine prosthetic group from ACP. This chain is Acyl carrier protein phosphodiesterase, found in Klebsiella pneumoniae (strain 342).